An 864-amino-acid polypeptide reads, in one-letter code: Mitochondrial 15S rRNA processing factor CCM1 (864 aa).

A mitochondrion-targeting transit peptide spans 1 to 76; that stretch reads MYMARCGPKN…REFSNTLKER (76 aa). PPR repeat units follow at residues 319 to 353 and 356 to 390; these read NKQNLTTVIQFYSRKEMTKQAWNTFDTMKFLSTKH and DICTYNTMLRICEKERNFPKALDLFQEIQDHNIKP.

It belongs to the CCM1 family. As to quaternary structure, binds to mitochondrial small subunit 15S rRNA.

The protein resides in the mitochondrion. Its function is as follows. Regulates mitochondrial small subunit maturation by controlling 15S rRNA 5'-end processing. Localizes to the 5' precursor of the 15S rRNA in a position that is subsequently occupied by mS47 in the mature yeast mtSSU. Uses structure and sequence-specific RNA recognition, binding to a single-stranded region of the precursor and specifically recognizing bases -6 to -1. The exchange of Ccm1 for mS47 is coupled to the irreversible removal of precursor rRNA that is accompanied by conformational changes of the mitoribosomal proteins uS5m and mS26. These conformational changes signal completion of 5'-end rRNA processing through protection of the mature 5'-end of the 15S rRNA and stabilization of mS47. The removal of the 5' precursor together with the dissociation of Ccm1 may be catalyzed by the 5'-3' exoribonuclease Pet127. Involved in the specific removal of group I introns in mitochondrial encoded transcripts. The chain is Mitochondrial 15S rRNA processing factor CCM1 (CCM1) from Saccharomyces cerevisiae (strain YJM789) (Baker's yeast).